The chain runs to 181 residues: S-fimbrial protein subunit SfaA (181 aa).

The first 24 residues, 1 to 24 (MKLKFISMAVFSALTLGVATNASA), serve as a signal peptide directing secretion. Cysteine 44 and cysteine 84 are disulfide-bonded.

This sequence belongs to the fimbrial protein family.

The protein localises to the fimbrium. Functionally, fimbriae (also called pili), polar filaments radiating from the surface of the bacterium to a length of 0.5-1.5 micrometers and numbering 100-300 per cell, enable bacteria to colonize the epithelium of specific host organs. In terms of biological role, the major fimbrial subunit. Interacts with alpha-sialic acid-(2-3)-beta-Gal containing receptors. It belongs to the group of Mrh (Mannose-resistant hemagglutination) fimbrial proteins. This is S-fimbrial protein subunit SfaA (sfaA) from Escherichia coli O6:K15:H31 (strain 536 / UPEC).